A 264-amino-acid polypeptide reads, in one-letter code: Ribosomal protein L11 methyltransferase (264 aa).

4 residues coordinate S-adenosyl-L-methionine: Thr-116, Gly-137, Asp-159, and Asn-200.

Belongs to the methyltransferase superfamily. PrmA family.

The protein resides in the cytoplasm. The catalysed reaction is L-lysyl-[protein] + 3 S-adenosyl-L-methionine = N(6),N(6),N(6)-trimethyl-L-lysyl-[protein] + 3 S-adenosyl-L-homocysteine + 3 H(+). Methylates ribosomal protein L11. This Thermotoga maritima (strain ATCC 43589 / DSM 3109 / JCM 10099 / NBRC 100826 / MSB8) protein is Ribosomal protein L11 methyltransferase.